We begin with the raw amino-acid sequence, 452 residues long: Peptidoglycan DL-endopeptidase CwlO (452 aa).

A signal peptide spans 1-30 (MKKKVYTFGLASILGTASLFTPFMNNTASA). Over residues 28–38 (ASAETSQQKQE) the composition is skewed to polar residues. 2 disordered regions span residues 28-53 (ASAE…IESK) and 258-317 (AAAA…GSVV). Composition is skewed to basic and acidic residues over residues 39 to 53 (IQQK…IESK) and 263 to 275 (KAKE…EKSD). The segment covering 276 to 317 (SGSSSSSNSGSVSKSDGSSNSGSSSSKKSSSPSRNYSSGSVV) has biased composition (low complexity). Residues 321 to 450 (GNAIEAAIST…KAFNGVVRRV (130 aa)) enclose the NlpC/P60 domain. Cys-358 functions as the Nucleophile in the catalytic mechanism. His-410 functions as the Proton acceptor in the catalytic mechanism. Asn-422 is a catalytic residue.

This sequence belongs to the peptidase C40 family.

The protein localises to the secreted. Shows a cell wall hydrolytic DL-endopeptidase activity. This chain is Peptidoglycan DL-endopeptidase CwlO (cwlO), found in Bacillus licheniformis (strain ATCC 14580 / DSM 13 / JCM 2505 / CCUG 7422 / NBRC 12200 / NCIMB 9375 / NCTC 10341 / NRRL NRS-1264 / Gibson 46).